We begin with the raw amino-acid sequence, 562 residues long: Putative transport protein ECA2683 (562 aa).

6 consecutive transmembrane segments (helical) span residues leucine 8–glycine 28, leucine 32–glutamine 52, phenylalanine 66–phenylalanine 86, phenylalanine 93–leucine 113, tryptophan 116–valine 136, and histidine 158–alanine 178. RCK C-terminal domains lie at leucine 202 to aspartate 288 and lysine 290 to phenylalanine 373. 5 consecutive transmembrane segments (helical) span residues leucine 383–phenylalanine 403, phenylalanine 406–leucine 426, phenylalanine 447–serine 467, serine 478–leucine 498, and glycine 537–tryptophan 557.

Belongs to the AAE transporter (TC 2.A.81) family. YbjL subfamily.

It localises to the cell membrane. This is Putative transport protein ECA2683 from Pectobacterium atrosepticum (strain SCRI 1043 / ATCC BAA-672) (Erwinia carotovora subsp. atroseptica).